The chain runs to 431 residues: Enolase (431 aa).

Residue Gln-167 coordinates (2R)-2-phosphoglycerate. Residue Glu-209 is the Proton donor of the active site. 3 residues coordinate Mg(2+): Asp-246, Glu-290, and Asp-317. The (2R)-2-phosphoglycerate site is built by Lys-342, Arg-371, Ser-372, and Lys-393. Catalysis depends on Lys-342, which acts as the Proton acceptor.

Belongs to the enolase family. In terms of assembly, component of the RNA degradosome, a multiprotein complex involved in RNA processing and mRNA degradation. Requires Mg(2+) as cofactor.

It is found in the cytoplasm. The protein resides in the secreted. Its subcellular location is the cell surface. It carries out the reaction (2R)-2-phosphoglycerate = phosphoenolpyruvate + H2O. Its pathway is carbohydrate degradation; glycolysis; pyruvate from D-glyceraldehyde 3-phosphate: step 4/5. Functionally, catalyzes the reversible conversion of 2-phosphoglycerate (2-PG) into phosphoenolpyruvate (PEP). It is essential for the degradation of carbohydrates via glycolysis. The polypeptide is Enolase (Serratia proteamaculans (strain 568)).